The sequence spans 206 residues: Large ribosomal subunit protein uL13 (206 aa).

Belongs to the universal ribosomal protein uL13 family.

The protein is Large ribosomal subunit protein uL13 (RPL13A) of Picea mariana (Black spruce).